The primary structure comprises 147 residues: Large ribosomal subunit protein uL22c (147 aa).

Belongs to the universal ribosomal protein uL22 family. Part of the 50S ribosomal subunit.

Its subcellular location is the plastid. Its function is as follows. This protein binds specifically to 23S rRNA. Functionally, the globular domain of the protein is located near the polypeptide exit tunnel on the outside of the subunit, while an extended beta-hairpin is found that lines the wall of the exit tunnel in the center of the 70S ribosome. In Cuscuta gronovii (Common dodder), this protein is Large ribosomal subunit protein uL22c (rpl22).